A 1022-amino-acid chain; its full sequence is Sodium/potassium-transporting ATPase subunit alpha (1022 aa).

A propeptide spanning residues 1 to 5 is cleaved from the precursor; it reads MGKGA. The tract at residues 1-34 is disordered; that stretch reads MGKGAASEKYQPAATSENAKNSKKSKSKTTDLDE. The Cytoplasmic portion of the chain corresponds to 6 to 87; it reads ASEKYQPAAT…NALTPPPTTP (82 aa). The residue at position 16 (serine 16) is a Phosphoserine; by PKC. Residues 82 to 84 form an interaction with phosphoinositide-3 kinase region; the sequence is PPP. A helical transmembrane segment spans residues 88-108; the sequence is EWIKFCRQLFGGFSILLWTGA. Topologically, residues 109-131 are lumenal; it reads ILCFLAYGIQVATVDNPANDNLY. A helical membrane pass occupies residues 132–152; the sequence is LGVVLSTVVIITGCFSYYQEA. The Cytoplasmic segment spans residues 153 to 288; sequence KSSKIMDSFK…VGQTPIAAEI (136 aa). A disordered region spans residues 215-235; it reads NSSLTGESEPQSRSPEYSSEN. A helical transmembrane segment spans residues 289–308; that stretch reads EHFIHIITGVAVFLGVSFFI. At 309–320 the chain is on the lumenal side; the sequence is LSLILGYTWLEA. The helical transmembrane segment at 321–338 threads the bilayer; that stretch reads VIFLIGIIVANVPEGLLA. Residues 339–771 are Cytoplasmic-facing; it reads TVTVCLTLTA…EEGRLIFDNL (433 aa). Catalysis depends on aspartate 376, which acts as the 4-aspartylphosphate intermediate. 2 residues coordinate Mg(2+): aspartate 716 and aspartate 720. A helical membrane pass occupies residues 772 to 791; sequence KKSIAYTLTSNIPEITPFLV. Residues 792-801 are Lumenal-facing; it reads FIIANVPLPL. Residues 802-822 traverse the membrane as a helical segment; that stretch reads GTVTILCIDLGTDMVPAISLA. Topologically, residues 823–842 are cytoplasmic; that stretch reads YERAESDIMKRQPRNPKTDK. The helical transmembrane segment at 843-865 threads the bilayer; that stretch reads LVNERLISMAYGQIGMIQALGGF. Residues 866-917 lie on the Lumenal side of the membrane; the sequence is FSYFVILAENGFLPIDLIGIREKWDELWTQDLEDSYGQQWTYEQRKIVEYTC. The helical transmembrane segment at 918-937 threads the bilayer; the sequence is HTSFFVSIVIVQWADLIICK. Residues 938–950 are Cytoplasmic-facing; the sequence is TRRNSIFQQGMKN. Serine 942 carries the post-translational modification Phosphoserine; by PKA. Residues 951 to 969 form a helical membrane-spanning segment; it reads KILIFGLFEETALAAFLSY. Topologically, residues 970–984 are lumenal; the sequence is TPGTDIALRMYPLKP. The chain crosses the membrane as a helical span at residues 985–1005; that stretch reads SWWFCAFPYSLIIFLYDEARR. The Cytoplasmic portion of the chain corresponds to 1006–1022; it reads FILRRNPGGWVEQETYY.

This sequence belongs to the cation transport ATPase (P-type) (TC 3.A.3) family. Type IIC subfamily. The sodium/potassium-transporting ATPase is composed of a catalytic alpha subunit, an auxiliary non-catalytic beta subunit and an additional regulatory subunit.

It is found in the cell membrane. The catalysed reaction is K(+)(out) + Na(+)(in) + ATP + H2O = K(+)(in) + Na(+)(out) + ADP + phosphate + H(+). In terms of biological role, this is the catalytic component of the active enzyme, which catalyzes the hydrolysis of ATP coupled with the exchange of sodium and potassium ions across the plasma membrane. This action creates the electrochemical gradient of sodium and potassium ions, providing the energy for active transport of various nutrients. The polypeptide is Sodium/potassium-transporting ATPase subunit alpha (Tetronarce californica (Pacific electric ray)).